Reading from the N-terminus, the 347-residue chain is NADH-ubiquinone oxidoreductase chain 2 (347 aa).

The next 11 membrane-spanning stretches (helical) occupy residues 1–21 (MNPM…FIVT), 25–45 (HWFM…PVLM), 59–79 (YFLT…INLM), 96–116 (MLIT…FWVP), 122–142 (VSLP…LSLL), 149–169 (VNMN…GWGG), 178–198 (IMAY…VYNP), 201–221 (SLLN…LLIF), 237–257 (APII…LPPL), 274–294 (NSVI…FFYM), and 326–346 (MLPL…LILL).

The protein belongs to the complex I subunit 2 family. As to quaternary structure, core subunit of respiratory chain NADH dehydrogenase (Complex I) which is composed of 45 different subunits. Interacts with TMEM242.

The protein localises to the mitochondrion inner membrane. The enzyme catalyses a ubiquinone + NADH + 5 H(+)(in) = a ubiquinol + NAD(+) + 4 H(+)(out). Core subunit of the mitochondrial membrane respiratory chain NADH dehydrogenase (Complex I) that is believed to belong to the minimal assembly required for catalysis. Complex I functions in the transfer of electrons from NADH to the respiratory chain. The immediate electron acceptor for the enzyme is believed to be ubiquinone. This chain is NADH-ubiquinone oxidoreductase chain 2, found in Crocidura suaveolens gueldenstaedtii (Gueldenstaedt's shrew).